A 527-amino-acid polypeptide reads, in one-letter code: MPIDKIFKDDASEEKGERARMASFVGAMAISDLVKSTLGPKGMDKILQSTGRGHAVTVTNDGATILKSLHIDNPAAKVLVDISKVQDDEVGDGTTSVVVLAGELLREAEKLVASKIHPMTIIAGYRMASECARNALLKRVIDNKDNAEKFRSDLLKIAMTTLCSKILSQDKEHFAEMAVDAVFRLKGSTNLEAIQIIKKPGGSLKDSFLDEGFILDKKIGIGQPKRIENANILVANTAMDTDKVKIYGARVRVDSMTKVAEIEGAEKEKMKDKVKKIIGHGINCFVNRQLIYNFPEELFADAGILAIEHADFEGIERLGLVTGGEIASTFDNPESVKLGHCKLIEEIMIGEDKLIHFSGCEMGQACSIVLRGASHHVLDEAERSLHDALCVLSQTVNDTRVLLGGGWPEMVMAKEVDELARKTAGKKSHAIEAFSRALVAIPTTIADNAGLDSAELVAQLRAEHHTEGCNAGIDVITGAVGDMEERGIYEAFKVKQAVLLSATEASEMILRVDEIITCAPRRREDRM.

Belongs to the TCP-1 chaperonin family. In terms of assembly, heterooligomeric complex of about 850 to 900 kDa that forms two stacked rings, 12 to 16 nm in diameter.

It localises to the cytoplasm. Molecular chaperone; assists the folding of proteins upon ATP hydrolysis. Known to play a role, in vitro, in the folding of actin and tubulin. The polypeptide is T-complex protein 1 subunit beta (Arabidopsis thaliana (Mouse-ear cress)).